The sequence spans 548 residues: Thermosome subunit alpha (548 aa).

Residues 527-548 (TKPEGGQGGGMPGGMGGMDMGM) form a disordered region. Gly residues predominate over residues 531 to 548 (GGQGGGMPGGMGGMDMGM).

It belongs to the TCP-1 chaperonin family. Forms a Heterooligomeric complex of two stacked eight-membered rings.

Molecular chaperone; binds unfolded polypeptides in vitro, and has a weak ATPase activity. The sequence is that of Thermosome subunit alpha (thsA) from Thermococcus sp. (strain JCM 11816 / KS-1).